A 129-amino-acid polypeptide reads, in one-letter code: Large ribosomal subunit protein bL19 (129 aa).

This sequence belongs to the bacterial ribosomal protein bL19 family.

Functionally, this protein is located at the 30S-50S ribosomal subunit interface and may play a role in the structure and function of the aminoacyl-tRNA binding site. The sequence is that of Large ribosomal subunit protein bL19 from Burkholderia mallei (strain NCTC 10247).